Consider the following 209-residue polypeptide: Protein lin-28 homolog A (209 aa).

The segment at M1–A31 is disordered. An N-acetylglycine modification is found at G2. S3 carries the phosphoserine modification. The CSD domain occupies H39–P112. The flexible linker stretch occupies residues G113–G136. A Phosphoserine modification is found at S120. 2 CCHC-type zinc fingers span residues D137–L154 and K159–L176. Positions A178–N209 are disordered. At S200 the chain carries Phosphoserine.

It belongs to the lin-28 family. As to quaternary structure, monomer. During skeletal muscle differentiation, associated with translation initiation complexes in the polysomal compartment. Directly interacts with EIF3S2. Interacts with NCL in an RNA-dependent manner. Interacts (via C-terminus) with DHX9 (via N- and C-terminus); this interaction occurs in a RNA-independent manner. Interacts with TUT4 in the presence of pre-let-7 RNA. As to expression, expressed in embryonic stem cells, placenta and testis. Tends to be up-regulated in HER2-overexpressing breast tumors.

It localises to the cytoplasm. The protein localises to the rough endoplasmic reticulum. Its subcellular location is the P-body. It is found in the stress granule. The protein resides in the nucleus. It localises to the nucleolus. Functionally, RNA-binding protein that inhibits processing of pre-let-7 miRNAs and regulates translation of mRNAs that control developmental timing, pluripotency and metabolism. Seems to recognize a common structural G-quartet (G4) feature in its miRNA and mRNA targets. 'Translational enhancer' that drives specific mRNAs to polysomes and increases the efficiency of protein synthesis. Its association with the translational machinery and target mRNAs results in an increased number of initiation events per molecule of mRNA and, indirectly, in mRNA stabilization. Binds IGF2 mRNA, MYOD1 mRNA, ARBP/36B4 ribosomal protein mRNA and its own mRNA. Essential for skeletal muscle differentiation program through the translational up-regulation of IGF2 expression. Suppressor of microRNA (miRNA) biogenesis, including that of let-7, miR107, miR-143 and miR-200c. Specifically binds the miRNA precursors (pre-miRNAs), recognizing an 5'-GGAG-3' motif found in pre-miRNA terminal loop, and recruits TUT4 and TUT7 uridylyltransferases. This results in the terminal uridylation of target pre-miRNAs. Uridylated pre-miRNAs fail to be processed by Dicer and undergo degradation. The repression of let-7 expression is required for normal development and contributes to maintain the pluripotent state by preventing let-7-mediated differentiation of embryonic stem cells. Localized to the periendoplasmic reticulum area, binds to a large number of spliced mRNAs and inhibits the translation of mRNAs destined for the ER, reducing the synthesis of transmembrane proteins, ER or Golgi lumen proteins, and secretory proteins. Binds to and enhances the translation of mRNAs for several metabolic enzymes, such as PFKP, PDHA1 or SDHA, increasing glycolysis and oxidative phosphorylation. Which, with the let-7 repression may enhance tissue repair in adult tissue. This is Protein lin-28 homolog A (LIN28A) from Homo sapiens (Human).